The following is a 317-amino-acid chain: MPDSRPDTELSNPQSAKAPLDPHLKALENESIHIFREVAAEFERPVMLYSIGKDSSVLLHLARKAFYPGRVPFPLLHVNTGWKFREMIAFRDETAKKYDLDLIEHINPRGAAENITPFTHGSAAFTDIMKTESLRQALDAGQFDAAFGGARRDEEASRAKERIYSFRTPDHRWDPRNQRPELWNVYNGMIRKGESVRAFPLSNWTEVDIWRYIQAEDIPLVPLYYAKMRKFVERDGMMILAEDPRLELLPGEVRQEGMIRFRTLGDFPLTGAIRSQATTLQEVIAELEIATVSERQGRAIDRDQSGSMEKKKREGYF.

2 disordered regions span residues 1 to 21 and 298 to 317; these read MPDS…APLD and RAID…EGYF.

This sequence belongs to the PAPS reductase family. CysD subfamily. In terms of assembly, heterodimer composed of CysD, the smaller subunit, and CysN.

It catalyses the reaction sulfate + ATP + H(+) = adenosine 5'-phosphosulfate + diphosphate. Its pathway is sulfur metabolism; hydrogen sulfide biosynthesis; sulfite from sulfate: step 1/3. In terms of biological role, with CysN forms the ATP sulfurylase (ATPS) that catalyzes the adenylation of sulfate producing adenosine 5'-phosphosulfate (APS) and diphosphate, the first enzymatic step in sulfur assimilation pathway. APS synthesis involves the formation of a high-energy phosphoric-sulfuric acid anhydride bond driven by GTP hydrolysis by CysN coupled to ATP hydrolysis by CysD. The polypeptide is Sulfate adenylyltransferase subunit 2 (Rhizobium etli (strain CIAT 652)).